Reading from the N-terminus, the 387-residue chain is Phosphoglycerate kinase (387 aa).

Residues 21–23 (DLN), R36, 59–62 (HLGR), R113, and R146 contribute to the substrate site. Residues K197, E314, and 340 to 343 (GGDT) each bind ATP.

Belongs to the phosphoglycerate kinase family. In terms of assembly, monomer.

The protein resides in the cytoplasm. It catalyses the reaction (2R)-3-phosphoglycerate + ATP = (2R)-3-phospho-glyceroyl phosphate + ADP. The protein operates within carbohydrate degradation; glycolysis; pyruvate from D-glyceraldehyde 3-phosphate: step 2/5. This is Phosphoglycerate kinase from Marinomonas sp. (strain MWYL1).